We begin with the raw amino-acid sequence, 428 residues long: Glutamate-1-semialdehyde 2,1-aminomutase (428 aa).

Lys-267 bears the N6-(pyridoxal phosphate)lysine mark.

It belongs to the class-III pyridoxal-phosphate-dependent aminotransferase family. HemL subfamily. As to quaternary structure, homodimer. The cofactor is pyridoxal 5'-phosphate.

It localises to the cytoplasm. It catalyses the reaction (S)-4-amino-5-oxopentanoate = 5-aminolevulinate. The protein operates within porphyrin-containing compound metabolism; protoporphyrin-IX biosynthesis; 5-aminolevulinate from L-glutamyl-tRNA(Glu): step 2/2. It functions in the pathway porphyrin-containing compound metabolism; chlorophyll biosynthesis. This is Glutamate-1-semialdehyde 2,1-aminomutase from Prochlorococcus marinus (strain MIT 9303).